Reading from the N-terminus, the 80-residue chain is MTDFTPDAILDATGLNCPEPVMMLHQHVRNLAAGGLLKVIATDPSTRRDIPKFCNFLGHELLQQQEDAGTFLYWIRKKAD.

The active-site Cysteine persulfide intermediate is Cys-17.

The protein belongs to the sulfur carrier protein TusA family.

Its subcellular location is the cytoplasm. Its function is as follows. Sulfur carrier protein which probably makes part of a sulfur-relay system. The chain is Sulfur carrier protein TusA from Pseudomonas putida (strain ATCC 47054 / DSM 6125 / CFBP 8728 / NCIMB 11950 / KT2440).